A 1342-amino-acid polypeptide reads, in one-letter code: DNA-directed RNA polymerase subunit beta (1342 aa).

It belongs to the RNA polymerase beta chain family. In terms of assembly, the RNAP catalytic core consists of 2 alpha, 1 beta, 1 beta' and 1 omega subunit. When a sigma factor is associated with the core the holoenzyme is formed, which can initiate transcription.

It carries out the reaction RNA(n) + a ribonucleoside 5'-triphosphate = RNA(n+1) + diphosphate. DNA-dependent RNA polymerase catalyzes the transcription of DNA into RNA using the four ribonucleoside triphosphates as substrates. This Shewanella amazonensis (strain ATCC BAA-1098 / SB2B) protein is DNA-directed RNA polymerase subunit beta.